We begin with the raw amino-acid sequence, 355 residues long: S-adenosylmethionine:tRNA ribosyltransferase-isomerase (355 aa).

It belongs to the QueA family. Monomer.

The protein resides in the cytoplasm. It carries out the reaction 7-aminomethyl-7-carbaguanosine(34) in tRNA + S-adenosyl-L-methionine = epoxyqueuosine(34) in tRNA + adenine + L-methionine + 2 H(+). It functions in the pathway tRNA modification; tRNA-queuosine biosynthesis. Transfers and isomerizes the ribose moiety from AdoMet to the 7-aminomethyl group of 7-deazaguanine (preQ1-tRNA) to give epoxyqueuosine (oQ-tRNA). The sequence is that of S-adenosylmethionine:tRNA ribosyltransferase-isomerase from Gluconacetobacter diazotrophicus (strain ATCC 49037 / DSM 5601 / CCUG 37298 / CIP 103539 / LMG 7603 / PAl5).